Reading from the N-terminus, the 461-residue chain is Chromosomal replication initiator protein DnaA (461 aa).

The domain I, interacts with DnaA modulators stretch occupies residues 1 to 84 (MAVSLWQQCI…RFDIGSRPSA (84 aa)). Positions 84–124 (AKKFEPAPVATVRAPNTQTKATVGTYFNTQAEPIANANHRS) are domain II. Positions 125-341 (NINPTYQFDN…GALNRVIANA (217 aa)) are domain III, AAA+ region. Residues Gly-169, Gly-171, Lys-172, and Thr-173 each contribute to the ATP site. Residues 342 to 461 (NFTGRPITID…YANLIRTLSS (120 aa)) are domain IV, binds dsDNA.

The protein belongs to the DnaA family. As to quaternary structure, oligomerizes as a right-handed, spiral filament on DNA at oriC.

The protein localises to the cytoplasm. Functionally, plays an essential role in the initiation and regulation of chromosomal replication. ATP-DnaA binds to the origin of replication (oriC) to initiate formation of the DNA replication initiation complex once per cell cycle. Binds the DnaA box (a 9 base pair repeat at the origin) and separates the double-stranded (ds)DNA. Forms a right-handed helical filament on oriC DNA; dsDNA binds to the exterior of the filament while single-stranded (ss)DNA is stabiized in the filament's interior. The ATP-DnaA-oriC complex binds and stabilizes one strand of the AT-rich DNA unwinding element (DUE), permitting loading of DNA polymerase. After initiation quickly degrades to an ADP-DnaA complex that is not apt for DNA replication. Binds acidic phospholipids. In Shewanella putrefaciens (strain CN-32 / ATCC BAA-453), this protein is Chromosomal replication initiator protein DnaA.